Here is an 809-residue protein sequence, read N- to C-terminus: Cell division control protein 48 homolog A (809 aa).

Serine 2 bears the N-acetylserine mark. Serine 41 carries the phosphoserine modification. Residues glycine 210, glycine 248–leucine 256, and histidine 387 each bind ADP. Glycine 521–leucine 529 contacts ATP. The tract at residues alanine 782–asparagine 809 is disordered. A compositionally biased stretch (low complexity) spans alanine 791 to alanine 801.

Belongs to the AAA ATPase family. Homohexamer. Interacts with SERK1, GRF6, KAPP and SYP31, but not with KNOLLE. Component of the SERK1 signaling complex, composed of KAPP, CDC48A, GRF6 or GRF7, SERK1, SERK2, SERK3/BAK1 and BRI1. Interacts with PUX1, PUX2, PUX3, PUX4, PUX5, PUX7 and PUX11 via its N-terminus. In terms of processing, phosphorylated on at least one threonine residue and on Ser-41 by SERK1.

It is found in the nucleus. The protein resides in the cytoplasm. Its subcellular location is the cytoskeleton. It localises to the phragmoplast. The protein localises to the cell membrane. Probably functions in cell division and growth processes. Interacts with certain SNAREs as part of specialized membrane fusion events where vesicles from the same organelle fuse (homotypic fusion). The chain is Cell division control protein 48 homolog A (CDC48A) from Arabidopsis thaliana (Mouse-ear cress).